A 324-amino-acid polypeptide reads, in one-letter code: Phospho-N-acetylmuramoyl-pentapeptide-transferase (324 aa).

The next 10 helical transmembrane spans lie at 5 to 25 (VILFTAGLAFIITVVLSPIFI), 55 to 75 (GGLMILLSLSITTWLMSDIFF), 81 to 101 (TYMLLFVTVGYGLLGFIDDFI), 122 to 142 (LIALIFYFFFQHYSMSTVVSI), 147 to 167 (VSLDLGVAYVLLIIFMLVGGS), 176 to 196 (LDGLLAGTAAIAFGAYAVLAW), 203 to 223 (VAIFSVAVVGAVLGFLVFNAH), 227 to 247 (VFMGDTGSLALGGAIVTIAIL), 250 to 270 (LEILLVIIGGVFVIETLSVII), and 302 to 322 (VVVTFWAVGLLFAILGIYIEV).

This sequence belongs to the glycosyltransferase 4 family. MraY subfamily. Mg(2+) serves as cofactor.

Its subcellular location is the cell membrane. It catalyses the reaction UDP-N-acetyl-alpha-D-muramoyl-L-alanyl-gamma-D-glutamyl-meso-2,6-diaminopimeloyl-D-alanyl-D-alanine + di-trans,octa-cis-undecaprenyl phosphate = di-trans,octa-cis-undecaprenyl diphospho-N-acetyl-alpha-D-muramoyl-L-alanyl-D-glutamyl-meso-2,6-diaminopimeloyl-D-alanyl-D-alanine + UMP. Its pathway is cell wall biogenesis; peptidoglycan biosynthesis. Its function is as follows. Catalyzes the initial step of the lipid cycle reactions in the biosynthesis of the cell wall peptidoglycan: transfers peptidoglycan precursor phospho-MurNAc-pentapeptide from UDP-MurNAc-pentapeptide onto the lipid carrier undecaprenyl phosphate, yielding undecaprenyl-pyrophosphoryl-MurNAc-pentapeptide, known as lipid I. This chain is Phospho-N-acetylmuramoyl-pentapeptide-transferase, found in Anoxybacillus flavithermus (strain DSM 21510 / WK1).